We begin with the raw amino-acid sequence, 99 residues long: Large ribosomal subunit protein uL23 (99 aa).

This sequence belongs to the universal ribosomal protein uL23 family. In terms of assembly, part of the 50S ribosomal subunit. Contacts protein L29, and trigger factor when it is bound to the ribosome.

One of the early assembly proteins it binds 23S rRNA. One of the proteins that surrounds the polypeptide exit tunnel on the outside of the ribosome. Forms the main docking site for trigger factor binding to the ribosome. This Shewanella loihica (strain ATCC BAA-1088 / PV-4) protein is Large ribosomal subunit protein uL23.